Consider the following 154-residue polypeptide: Ribosome maturation factor RimP (154 aa).

The protein belongs to the RimP family.

The protein localises to the cytoplasm. Its function is as follows. Required for maturation of 30S ribosomal subunits. This is Ribosome maturation factor RimP from Prochlorococcus marinus (strain MIT 9313).